A 188-amino-acid polypeptide reads, in one-letter code: ATP synthase subunit b 1 (188 aa).

A helical transmembrane segment spans residues 35–55; that stretch reads VHFSSHFFWLAISFGFFYLFI.

The protein belongs to the ATPase B chain family. As to quaternary structure, F-type ATPases have 2 components, F(1) - the catalytic core - and F(0) - the membrane proton channel. F(1) has five subunits: alpha(3), beta(3), gamma(1), delta(1), epsilon(1). F(0) has three main subunits: a(1), b(2) and c(10-14). The alpha and beta chains form an alternating ring which encloses part of the gamma chain. F(1) is attached to F(0) by a central stalk formed by the gamma and epsilon chains, while a peripheral stalk is formed by the delta and b chains.

It is found in the cell inner membrane. Functionally, f(1)F(0) ATP synthase produces ATP from ADP in the presence of a proton or sodium gradient. F-type ATPases consist of two structural domains, F(1) containing the extramembraneous catalytic core and F(0) containing the membrane proton channel, linked together by a central stalk and a peripheral stalk. During catalysis, ATP synthesis in the catalytic domain of F(1) is coupled via a rotary mechanism of the central stalk subunits to proton translocation. In terms of biological role, component of the F(0) channel, it forms part of the peripheral stalk, linking F(1) to F(0). The protein is ATP synthase subunit b 1 of Bartonella tribocorum (strain CIP 105476 / IBS 506).